Consider the following 107-residue polypeptide: Putative protein RFPL3S (107 aa).

Strongly expressed in the testis and weakly in brain, placenta and pancreas.

This chain is Putative protein RFPL3S (RFPL3S), found in Homo sapiens (Human).